The primary structure comprises 531 residues: Keratin, type II cytoskeletal 79 (531 aa).

Residues 1 to 12 (MRSSLSRQTFST) show a composition bias toward polar residues. The tract at residues 1–55 (MRSSLSRQTFSTKGGFSSNSASGGGGSRMRTSYSSVTMSRGSGGGGGVRSGSSSG) is disordered. Residues 1-138 (MRSSLSRQTF…DPEIQRVRTQ (138 aa)) are head. The segment covering 28-40 (RMRTSYSSVTMSR) has biased composition (low complexity). The segment covering 41-55 (GSGGGGGVRSGSSSG) has biased composition (gly residues). The tract at residues 139–174 (EREQIKTLNNKFASFIDKVRFLEQQNKVLETKWALL) is coil 1A. Residues 139–453 (EREQIKTLNN…KLLESEESRM (315 aa)) form the IF rod domain. Residues 175-194 (QEQSQNTGVARSLEPFFENY) form a linker 1 region. The segment at 195-286 (LSTLRRQLDT…QLFEMELSQV (92 aa)) is coil 1B. The interval 287 to 310 (QTNVSDTNVILSMDNNRNLDLDSI) is linker 12. A coil 2 region spans residues 311-449 (IAEVKAQYEL…ATYRKLLESE (139 aa)). The tract at residues 450–531 (ESRMSGDCPS…TTVKTSSRRY (82 aa)) is tail.

It belongs to the intermediate filament family. As to quaternary structure, heterotetramer of two type I and two type II keratins.

The chain is Keratin, type II cytoskeletal 79 (Krt79) from Mus musculus (Mouse).